The chain runs to 365 residues: Keratin-associated protein 10-6 (365 aa).

29 consecutive repeat copies span residues 41 to 45 (CCEPP), 46 to 50 (CCAPA), 67 to 71 (CCPVT), 89 to 93 (CCQQS), 99 to 103 (CCASS), 109 to 113 (CCVPV), 114 to 118 (CCKTV), 119 to 123 (CCKPV), 124 to 128 (CCVSV), 129 to 133 (CCGDS), 135 to 139 (CCQQS), 145 to 149 (CCTSS), 155 to 159 (CCVPV), 160 to 164 (CCKPV), 172 to 176 (CCQQS), 186 to 190 (CCQAV), 208 to 212 (CCQQS), 218 to 222 (CCTSS), 228 to 232 (CCVPV), 233 to 237 (CCVPV), 238 to 242 (CCVPT), 250 to 254 (CCQQS), 260 to 264 (CCTSS), 270 to 274 (CCVPV), 282 to 286 (CCQQS), 292 to 296 (CCTAS), 297 to 301 (CCRSS), 316 to 320 (CCVPV), and 334 to 338 (CCRTA). Residues 41 to 338 (CCEPPCCAPA…SCQPSCCRTA (298 aa)) form a 29 X 5 AA repeats of C-C-X(3) region.

This sequence belongs to the KRTAP type 10 family. In terms of assembly, interacts with hair keratins. Restricted to a narrow region of the hair fiber cuticle, lying approximately 20 cell layers above the apex of the dermal papilla of the hair root; not detected in any other tissues.

In the hair cortex, hair keratin intermediate filaments are embedded in an interfilamentous matrix, consisting of hair keratin-associated proteins (KRTAP), which are essential for the formation of a rigid and resistant hair shaft through their extensive disulfide bond cross-linking with abundant cysteine residues of hair keratins. The matrix proteins include the high-sulfur and high-glycine-tyrosine keratins. The chain is Keratin-associated protein 10-6 (KRTAP10-6) from Homo sapiens (Human).